The primary structure comprises 273 residues: MNNRVHQGHLARKRFGQNFLNDQFVIDSIVSAINPQKGQAMVEIGPGLAALTEPVGERLDQLTVIELDRDLAARLQTHPFLGPKLTIYQQDAMTFNFGELAAKMGQPLRVFGNLPYNISTPLMFHLFSYTDAIADMHFMLQKEVVNRLVAGPNSKAYGRLSVMAQYYCNVIPVLEVPPSAFTPPPKVDSAVVRLVPHATMPHPVKDVRVLSRITTEAFNQRRKTIRNSLGNLFSAEVLTGMGIDPAMRAENISVAQYCQMANYLAENAPLQES.

S-adenosyl-L-methionine is bound by residues N18, L20, G45, E66, D91, and N113.

It belongs to the class I-like SAM-binding methyltransferase superfamily. rRNA adenine N(6)-methyltransferase family. RsmA subfamily.

The protein resides in the cytoplasm. It catalyses the reaction adenosine(1518)/adenosine(1519) in 16S rRNA + 4 S-adenosyl-L-methionine = N(6)-dimethyladenosine(1518)/N(6)-dimethyladenosine(1519) in 16S rRNA + 4 S-adenosyl-L-homocysteine + 4 H(+). Specifically dimethylates two adjacent adenosines (A1518 and A1519) in the loop of a conserved hairpin near the 3'-end of 16S rRNA in the 30S particle. May play a critical role in biogenesis of 30S subunits. The sequence is that of Ribosomal RNA small subunit methyltransferase A from Escherichia coli O81 (strain ED1a).